Reading from the N-terminus, the 340-residue chain is Branched-chain-amino-acid aminotransferase (340 aa).

The residue at position 187 (Lys187) is an N6-(pyridoxal phosphate)lysine.

It belongs to the class-IV pyridoxal-phosphate-dependent aminotransferase family. It depends on pyridoxal 5'-phosphate as a cofactor.

The enzyme catalyses L-leucine + 2-oxoglutarate = 4-methyl-2-oxopentanoate + L-glutamate. The catalysed reaction is L-isoleucine + 2-oxoglutarate = (S)-3-methyl-2-oxopentanoate + L-glutamate. It carries out the reaction L-valine + 2-oxoglutarate = 3-methyl-2-oxobutanoate + L-glutamate. Its pathway is amino-acid biosynthesis; L-isoleucine biosynthesis; L-isoleucine from 2-oxobutanoate: step 4/4. It participates in amino-acid biosynthesis; L-leucine biosynthesis; L-leucine from 3-methyl-2-oxobutanoate: step 4/4. The protein operates within amino-acid biosynthesis; L-valine biosynthesis; L-valine from pyruvate: step 4/4. Acts on leucine, isoleucine and valine. In Helicobacter pylori (strain J99 / ATCC 700824) (Campylobacter pylori J99), this protein is Branched-chain-amino-acid aminotransferase (ilvE).